The chain runs to 306 residues: Putative syntaxin-3 (306 aa).

Over 1 to 279 (MPRDRLKELQ…QKRARKMKVC (279 aa)) the chain is Cytoplasmic. The interval 40–180 (QDADFEMFLE…QLSDEEIENA (141 aa)) is required for the regulation of the defecation motor program. The t-SNARE coiled-coil homology domain maps to 204–266 (YDEVKSRADE…KQARGNVEEA (63 aa)). The chain crosses the membrane as a helical; Anchor for type IV membrane protein span at residues 280–300 (IIIGSIIAVLILILFIQSAVC). Residues 301-306 (HFTPIC) are Extracellular-facing.

This sequence belongs to the syntaxin family. Expressed in body wall, pharyngeal, vulval and enteric muscles and in some head neurons.

The protein localises to the cell membrane. Its function is as follows. Potentially involved in docking of synaptic vesicles at presynaptic active zones. Acts in the intestine to regulate anterior body muscle contractions (aBOC) and the expulsion steps during the defecation motor program (DMP). The protein is Putative syntaxin-3 of Caenorhabditis elegans.